The chain runs to 155 residues: Small ribosomal subunit protein uS9 (155 aa).

This sequence belongs to the universal ribosomal protein uS9 family.

This is Small ribosomal subunit protein uS9 from Sinorhizobium medicae (strain WSM419) (Ensifer medicae).